The primary structure comprises 360 residues: DNA replication and repair protein RecF (360 aa).

30 to 37 is an ATP binding site; that stretch reads GQNGSGKT.

This sequence belongs to the RecF family.

It is found in the cytoplasm. In terms of biological role, the RecF protein is involved in DNA metabolism; it is required for DNA replication and normal SOS inducibility. RecF binds preferentially to single-stranded, linear DNA. It also seems to bind ATP. The protein is DNA replication and repair protein RecF of Shewanella baltica (strain OS185).